The sequence spans 137 residues: 5-hydroxytryptamine receptor 4 (137 aa).

Residues 12–35 traverse the membrane as a helical segment; the sequence is TPLRVAVLLAGCWAIPVLISFLPI. The N-linked (GlcNAc...) asparagine glycan is linked to N58. A helical membrane pass occupies residues 67 to 90; sequence NKPYAITCSVVAFYIPFLLMVLAY. Residues 112–137 form a disordered region; it reads APAEGRPPSADQHSTHRMRTETKAAK.

It belongs to the G-protein coupled receptor 1 family. Interacts (via C-terminus 330-346 AA) with GRK5; this interaction is promoted by 5-HT (serotonin).

The protein resides in the cell membrane. The protein localises to the endosome membrane. G-protein coupled receptor for 5-hydroxytryptamine (serotonin), a biogenic hormone that functions as a neurotransmitter, a hormone and a mitogen. Ligand binding causes a conformation change that triggers signaling via guanine nucleotide-binding proteins (G proteins) and modulates the activity of downstream effectors. HTR4 is coupled to G(s) G alpha proteins and mediates activation of adenylate cyclase activity. This is 5-hydroxytryptamine receptor 4 (HTR4) from Sus scrofa (Pig).